A 488-amino-acid chain; its full sequence is NADH-quinone oxidoreductase subunit N 2 (488 aa).

Transmembrane regions (helical) follow at residues 18-38 (FLPE…ELFI), 45-65 (LVLN…LLIP), 81-101 (PLAV…LPFA), 110-130 (SFYG…FVLA), 135-155 (LIIL…LTAL), 169-189 (YLIL…FMYI), 210-230 (LVLG…AVPF), 242-262 (PTPV…IPLV), 274-294 (LVWT…GNLV), 308-328 (SSIA…VIGM), 331-351 (VIYF…VLAL), 375-395 (IAFA…TVGF), 412-434 (WLAF…LVVV), and 458-478 (FALT…WFLI).

This sequence belongs to the complex I subunit 2 family. NDH-1 is composed of 14 different subunits. Subunits NuoA, H, J, K, L, M, N constitute the membrane sector of the complex.

The protein resides in the cell inner membrane. The enzyme catalyses a quinone + NADH + 5 H(+)(in) = a quinol + NAD(+) + 4 H(+)(out). In terms of biological role, NDH-1 shuttles electrons from NADH, via FMN and iron-sulfur (Fe-S) centers, to quinones in the respiratory chain. The immediate electron acceptor for the enzyme in this species is believed to be ubiquinone. Couples the redox reaction to proton translocation (for every two electrons transferred, four hydrogen ions are translocated across the cytoplasmic membrane), and thus conserves the redox energy in a proton gradient. The chain is NADH-quinone oxidoreductase subunit N 2 from Aquifex aeolicus (strain VF5).